Here is a 264-residue protein sequence, read N- to C-terminus: Endonuclease V (264 aa).

Mg(2+) contacts are provided by D72 and D137.

It belongs to the endonuclease V family. Mg(2+) serves as cofactor.

The protein resides in the cytoplasm. It catalyses the reaction Endonucleolytic cleavage at apurinic or apyrimidinic sites to products with a 5'-phosphate.. In terms of biological role, DNA repair enzyme involved in the repair of deaminated bases. Selectively cleaves double-stranded DNA at the second phosphodiester bond 3' to a deoxyinosine leaving behind the intact lesion on the nicked DNA. The chain is Endonuclease V from Halobacterium salinarum (strain ATCC 700922 / JCM 11081 / NRC-1) (Halobacterium halobium).